Reading from the N-terminus, the 126-residue chain is Protein translocase subunit SecE (126 aa).

The next 3 helical transmembrane spans lie at 20–40 (WLAA…YGEM), 42–62 (VVVR…VAAT), and 97–117 (IVLA…GIMV).

Belongs to the SecE/SEC61-gamma family. Component of the Sec protein translocase complex. Heterotrimer consisting of SecY, SecE and SecG subunits. The heterotrimers can form oligomers, although 1 heterotrimer is thought to be able to translocate proteins. Interacts with the ribosome. Interacts with SecDF, and other proteins may be involved. Interacts with SecA.

It is found in the cell inner membrane. Essential subunit of the Sec protein translocation channel SecYEG. Clamps together the 2 halves of SecY. May contact the channel plug during translocation. This Vibrio alginolyticus protein is Protein translocase subunit SecE.